A 206-amino-acid polypeptide reads, in one-letter code: MLDRHLHPRIKPLLHQCVRVLDKPGITPDGLTLVGFAIGVLALPFLALGWYLAALVVILLNRLLDGLDGALARRRELTDAGGFLDISLDFLFYALVPFGFILAAPEQNALAGGWLLFAFIGTGSSFLAFAALAAKHQIDNPGYAHKSFYYLGGLTEGTETILLFVLGCLFPAWFAWFAWIFGALCWMTTFTRVWSGYLTLKSLQRQ.

The Periplasmic segment spans residues 1-37 (MLDRHLHPRIKPLLHQCVRVLDKPGITPDGLTLVGFA). A helical membrane pass occupies residues 38 to 60 (IGVLALPFLALGWYLAALVVILL). The Cytoplasmic portion of the chain corresponds to 61 to 79 (NRLLDGLDGALARRRELTD). The helical transmembrane segment at 80–102 (AGGFLDISLDFLFYALVPFGFIL) threads the bilayer. Residues 103-111 (AAPEQNALA) lie on the Periplasmic side of the membrane. A helical membrane pass occupies residues 112–134 (GGWLLFAFIGTGSSFLAFAALAA). At 135 to 146 (KHQIDNPGYAHK) the chain is on the cytoplasmic side. Residues 147–169 (SFYYLGGLTEGTETILLFVLGCL) traverse the membrane as a helical segment. The Periplasmic portion of the chain corresponds to 170 to 173 (FPAW). The helical transmembrane segment at 174–196 (FAWFAWIFGALCWMTTFTRVWSG) threads the bilayer. Residues 197 to 206 (YLTLKSLQRQ) are Cytoplasmic-facing.

This sequence belongs to the CDP-alcohol phosphatidyltransferase class-I family.

The protein localises to the cell inner membrane. The polypeptide is Inner membrane protein YnjF (ynjF) (Escherichia coli (strain K12)).